Here is a 546-residue protein sequence, read N- to C-terminus: 3-(3-hydroxy-phenyl)propionate/3-hydroxycinnamic acid hydroxylase 2 (546 aa).

FAD contacts are provided by residues 10–39 (SVAI…VVER) and 278–288 (FVAGRIALVGD).

Belongs to the PheA/TfdB FAD monooxygenase family. Requires FAD as cofactor.

It catalyses the reaction 3-(3-hydroxyphenyl)propanoate + NADH + O2 + H(+) = 3-(2,3-dihydroxyphenyl)propanoate + NAD(+) + H2O. It carries out the reaction (2E)-3-(3-hydroxyphenyl)prop-2-enoate + NADH + O2 + H(+) = (2E)-3-(2,3-dihydroxyphenyl)prop-2-enoate + NAD(+) + H2O. Its pathway is aromatic compound metabolism; 3-phenylpropanoate degradation. Its function is as follows. Catalyzes the insertion of one atom of molecular oxygen into position 2 of the phenyl ring of 3-(3-hydroxyphenyl)propionate (3-HPP) and hydroxycinnamic acid (3HCI). The chain is 3-(3-hydroxy-phenyl)propionate/3-hydroxycinnamic acid hydroxylase 2 from Burkholderia vietnamiensis (strain G4 / LMG 22486) (Burkholderia cepacia (strain R1808)).